Here is a 78-residue protein sequence, read N- to C-terminus: Small ribosomal subunit protein bS18 (78 aa).

The protein belongs to the bacterial ribosomal protein bS18 family. As to quaternary structure, part of the 30S ribosomal subunit. Forms a tight heterodimer with protein bS6.

Functionally, binds as a heterodimer with protein bS6 to the central domain of the 16S rRNA, where it helps stabilize the platform of the 30S subunit. This is Small ribosomal subunit protein bS18 from Acidothermus cellulolyticus (strain ATCC 43068 / DSM 8971 / 11B).